The chain runs to 291 residues: Bifunctional protein FolD (291 aa).

Residues 168–170, Thr195, and Ile236 contribute to the NADP(+) site; that span reads GRG.

Belongs to the tetrahydrofolate dehydrogenase/cyclohydrolase family. As to quaternary structure, homodimer.

It carries out the reaction (6R)-5,10-methylene-5,6,7,8-tetrahydrofolate + NADP(+) = (6R)-5,10-methenyltetrahydrofolate + NADPH. The catalysed reaction is (6R)-5,10-methenyltetrahydrofolate + H2O = (6R)-10-formyltetrahydrofolate + H(+). Its pathway is one-carbon metabolism; tetrahydrofolate interconversion. In terms of biological role, catalyzes the oxidation of 5,10-methylenetetrahydrofolate to 5,10-methenyltetrahydrofolate and then the hydrolysis of 5,10-methenyltetrahydrofolate to 10-formyltetrahydrofolate. The chain is Bifunctional protein FolD from Bifidobacterium longum subsp. infantis (strain ATCC 15697 / DSM 20088 / JCM 1222 / NCTC 11817 / S12).